Reading from the N-terminus, the 42-residue chain is Photosystem I reaction center subunit IX (42 aa).

The chain crosses the membrane as a helical span at residues 7 to 27; that stretch reads YLSTAPVLATLWFGFLAGLLI.

It belongs to the PsaJ family.

The protein resides in the plastid. It localises to the chloroplast thylakoid membrane. Functionally, may help in the organization of the PsaE and PsaF subunits. This chain is Photosystem I reaction center subunit IX, found in Huperzia lucidula (Shining clubmoss).